The primary structure comprises 259 residues: HTH-type quorum sensing-dependent transcriptional regulator VjbR (259 aa).

Positions 76 to 179 are C12-HSL binding; sequence KNYFAIDPVF…AGIIHGTVCG (104 aa). One can recognise an HTH luxR-type domain in the interval 183-248; the sequence is ANSVASLLTP…SAVATALSLG (66 aa). Residues 207–226 constitute a DNA-binding region (H-T-H motif); that stretch reads DGEIAEILSIARWTVVTYLQ.

Its function is as follows. Transcriptional regulator involved in the global control of Brucella gene expression. Mediates the effects of the quorum sensing autoinducer C12-HSL (N-dodecanoyl-homoserine lactone) on a large and diverse number of genes. The polypeptide is HTH-type quorum sensing-dependent transcriptional regulator VjbR (vjbR) (Brucella ovis (strain ATCC 25840 / 63/290 / NCTC 10512)).